Reading from the N-terminus, the 338-residue chain is Glyceraldehyde-3-phosphate dehydrogenase (338 aa).

Residues 12-13 (RI), Asp-34, and Arg-79 each bind NAD(+). Residues 150–152 (SCT), Thr-181, 210–211 (TG), and Arg-233 each bind D-glyceraldehyde 3-phosphate. The active-site Nucleophile is the Cys-151. Residue Asn-315 participates in NAD(+) binding.

It belongs to the glyceraldehyde-3-phosphate dehydrogenase family. Homotetramer.

The protein localises to the cytoplasm. The catalysed reaction is D-glyceraldehyde 3-phosphate + phosphate + NAD(+) = (2R)-3-phospho-glyceroyl phosphate + NADH + H(+). It participates in carbohydrate degradation; glycolysis; pyruvate from D-glyceraldehyde 3-phosphate: step 1/5. This Sordaria macrospora protein is Glyceraldehyde-3-phosphate dehydrogenase (GPD).